Reading from the N-terminus, the 288-residue chain is Transposase InsF for insertion sequence IS3fB (288 aa).

An Integrase catalytic domain is found at 124-287 (YASGPNQKWA…SPEQFENQNL (164 aa)).

This sequence belongs to the transposase IS3/IS150/IS904 family.

Its function is as follows. Involved in the transposition of the insertion sequence IS3. This Escherichia coli (strain K12) protein is Transposase InsF for insertion sequence IS3fB (insF7).